The following is a 65-amino-acid chain: Small vasohibin-binding protein (65 aa).

A compositionally biased stretch (basic and acidic residues) spans 1–22; the sequence is MEPACRKDKQKQQTPTRGDRTK. The disordered stretch occupies residues 1-30; sequence MEPACRKDKQKQQTPTRGDRTKQKTAQQEL. Positions 31-51 form a coiled coil; the sequence is KQRQRAEIYALNKVMTELEQQ.

It belongs to the SVBP family.

Its subcellular location is the cytoplasm. It is found in the secreted. The protein localises to the cytoskeleton. Its function is as follows. Enhances the tyrosine carboxypeptidase activity of vash1 and vash2, thereby promoting the removal of the C-terminal tyrosine residue of alpha-tubulin. Also required to enhance the solubility and secretion of vash1 and vash2. May play a role in axon and excitatory synapse formation. The polypeptide is Small vasohibin-binding protein (Danio rerio (Zebrafish)).